The primary structure comprises 486 residues: Methionine aminopeptidase 2-2 (486 aa).

Over residues 1 to 10 (MGSKSPEGHR) the composition is skewed to basic and acidic residues. The tract at residues 1 to 120 (MGSKSPEGHR…ALPATELKQT (120 aa)) is disordered. The segment covering 46 to 56 (GDDDDDEDAEE) has biased composition (acidic residues). The span at 93–108 (KKKKRKKSNKKKKKTK) shows a compositional bias: basic residues. H238 serves as a coordination point for substrate. Positions 259, 270, and 339 each coordinate a divalent metal cation. H347 contacts substrate. Positions 372 and 467 each coordinate a divalent metal cation.

This sequence belongs to the peptidase M24A family. Methionine aminopeptidase eukaryotic type 2 subfamily. Requires Co(2+) as cofactor. The cofactor is Zn(2+). Mn(2+) is required as a cofactor. It depends on Fe(2+) as a cofactor.

The protein resides in the cytoplasm. It catalyses the reaction Release of N-terminal amino acids, preferentially methionine, from peptides and arylamides.. Cotranslationally removes the N-terminal methionine from nascent proteins. The N-terminal methionine is often cleaved when the second residue in the primary sequence is small and uncharged (Met-Ala-, Cys, Gly, Pro, Ser, Thr, or Val). The protein is Methionine aminopeptidase 2-2 of Aspergillus fumigatus (strain ATCC MYA-4609 / CBS 101355 / FGSC A1100 / Af293) (Neosartorya fumigata).